Here is a 187-residue protein sequence, read N- to C-terminus: Cytokinin riboside 5'-monophosphate phosphoribohydrolase (187 aa).

An Isoglutamyl lysine isopeptide (Lys-Gln) (interchain with Q-Cter in protein Pup) cross-link involves residue Lys74. Residues Glu80, 98–99, 115–121, and Thr127 each bind substrate; these read RK and GVGTLDE.

It belongs to the LOG family. In terms of assembly, homodimer. In terms of processing, pupylated at Lys-74 by the prokaryotic ubiquitin-like protein Pup, which leads to its degradation by the proteasome. The proteasomal control of cytokinin synthesis is essential to protect M.tuberculosis against host-produced NO.

The catalysed reaction is N(6)-(dimethylallyl)adenosine 5'-phosphate + H2O = N(6)-dimethylallyladenine + D-ribose 5-phosphate. The enzyme catalyses 9-ribosyl-trans-zeatin 5'-phosphate + H2O = trans-zeatin + D-ribose 5-phosphate. Its function is as follows. Catalyzes the hydrolytic removal of ribose 5'-monophosphate from nitrogen N6-modified adenosines, the final step of bioactive cytokinin synthesis. Is involved in the synthesis of isopentenyladenine (iP) and 2-methylthio-iP (2MeS-iP), the most abundant cytokinins detected in M.tuberculosis lysates and supernatants. Is also able to convert trans-zeatin-riboside monophosphate (tZRMP) to trans-zeatin (tZ) in vitro; however, it may not be involved in the biosynthesis of this minor cytokinin in vivo. Accumulation of Rv1205 sensitizes M.tuberculosis to nitric oxide since cytokinin breakdown products synergize with NO to kill M.tuberculosis. Shows a slow AMP hydrolase activity, but is not able to hydrolyze ATP. Displays no lysine decarboxylase (LDC) activity (L-lysine conversion to cadaverine). This is Cytokinin riboside 5'-monophosphate phosphoribohydrolase from Mycobacterium tuberculosis (strain ATCC 25618 / H37Rv).